The sequence spans 528 residues: MTERRDNVSHAPDAIEGPNDGAHAEETSPGFFSFENLGVAQVQVVGGTLNGYVIGYVAVYLLLYLTATECKFTTEGACGGRKIYGCKWSGTTCKFENPKCSEGSDPSDSCKNEVAYTSVYSGIFACAMIVGSMVGSIIAGKCITTFGLKKSFIIVSITCTIACVVVQVAIEYNNYYALCTGRVLIGLGVGILCSVFPMYVNENAHPKLCKMDGVLFQVFTTLGIMLAAMLGLILDKTGASKEEANMAGRLHVFSAVPLGLSVAMFLVGMFLRESTATFAQDDDGKADGGMDPNEYGWGQMLWPLFMGAVTAGTLQLTGINAVMNYAPKITENLGMDPSLGNFLVMAWNFVTSLVAIPLASRFTMRQMFITCSFVASCMCLFLCGIPVFPGVAEEKVKNGVATTGIALFIAAFEFGVGSCFFVLAQDLFPPSFRPKGSSFVVMMQFIFNILINLLYPITTEAISGGATGDQDKGQAVVFILFGLIGLICFVLQFFYLYPYDANQDHENDHGTEPVERILSPVDVPTPRN.

The disordered stretch occupies residues M1 to A22. Residues M1–Q43 lie on the Cytoplasmic side of the membrane. Residues V44 to Y64 form a helical membrane-spanning segment. Residues L65–S118 lie on the Extracellular side of the membrane. Residues V119–A139 traverse the membrane as a helical segment. At G140–S151 the chain is on the cytoplasmic side. Residues F152–Y172 traverse the membrane as a helical segment. Residues N173–Y175 lie on the Extracellular side of the membrane. A helical membrane pass occupies residues Y176–F196. Topologically, residues P197–G213 are cytoplasmic. The chain crosses the membrane as a helical span at residues V214–L234. Residues D235–L250 lie on the Extracellular side of the membrane. A helical transmembrane segment spans residues H251–L271. The Cytoplasmic segment spans residues R272 to L301. A helical membrane pass occupies residues W302–V322. Over M323–S338 the chain is Extracellular. The helical transmembrane segment at L339–A359 threads the bilayer. Residues S360–M367 are Cytoplasmic-facing. The helical transmembrane segment at F368 to F388 threads the bilayer. Residues P389–T403 are Extracellular-facing. A helical transmembrane segment spans residues G404–A424. Topologically, residues Q425–S438 are cytoplasmic. A helical transmembrane segment spans residues F439–T459. The Extracellular segment spans residues E460–A475. A helical transmembrane segment spans residues V476–L496. Over Y497 to N528 the chain is Cytoplasmic. The interval N507 to N528 is disordered.

The protein belongs to the major facilitator superfamily. Sugar transporter (TC 2.A.1.1) family.

It is found in the membrane. Functionally, facilitative glucose transporter. The polypeptide is Glucose transporter 1E (THT1E) (Trypanosoma brucei brucei).